The primary structure comprises 65 residues: VVYTDCTESGQNLCLCQGSNVCGQGNKCILGSNGEKNQCVTGEGTPKPQSHNDGDFEEIPEEYLQ.

Residues 1–3 form an interaction with thrombin active site region; sequence VVY. Intrachain disulfides connect Cys6/Cys14, Cys16/Cys28, and Cys22/Cys39. The segment at 40 to 65 is disordered; sequence VTGEGTPKPQSHNDGDFEEIPEEYLQ. The O-linked (GalNAc...) threonine glycan is linked to Thr45. The segment at 55–65 is interaction with fibrinogen-binding exosite of thrombin; sequence DFEEIPEEYLQ. The segment covering 55–65 has biased composition (acidic residues); the sequence is DFEEIPEEYLQ. Sulfotyrosine is present on Tyr63.

The protein belongs to the protease inhibitor I14 (hirudin) family.

Its subcellular location is the secreted. Hirudin is a potent thrombin-specific protease inhibitor. It forms a stable non-covalent complex with alpha-thrombin, thereby abolishing its ability to cleave fibrinogen. This chain is Hirudin-3B', found in Hirudo medicinalis (Medicinal leech).